A 613-amino-acid polypeptide reads, in one-letter code: Ectonucleoside triphosphate diphosphohydrolase 4 (613 aa).

Over 1 to 33 (MGRIGISCLFPASWHFSISPVGCPRILNTNLRQ) the chain is Cytoplasmic. Residues 34 to 54 (IVVISILAAAVSLLYFSVVII) form a helical membrane-spanning segment. Residues 55-559 (RSKYGWLSKD…AGHAHWRGVS (505 aa)) lie on the Lumenal side of the membrane. E222 serves as the catalytic Proton acceptor. Cysteines 368 and 395 form a disulfide. Residues N404 and N407 are each glycosylated (N-linked (GlcNAc...) asparagine). A disulfide bridge connects residues C461 and C490. A helical membrane pass occupies residues 560-580 (FVYNHYLFSGCFLVVLLSILL). The Cytoplasmic portion of the chain corresponds to 581–613 (YLLRLRRIHRRAPRTGSLWMEEGLPSQKGPGPL).

The protein belongs to the GDA1/CD39 NTPase family. It depends on Ca(2+) as a cofactor. The cofactor is Mg(2+). In terms of tissue distribution, ubiquitous.

It localises to the cytoplasmic vesicle. It is found in the autophagosome membrane. The protein localises to the lysosome membrane. The protein resides in the golgi apparatus membrane. It carries out the reaction a ribonucleoside 5'-triphosphate + H2O = a ribonucleoside 5'-diphosphate + phosphate + H(+). The catalysed reaction is a ribonucleoside 5'-diphosphate + H2O = a ribonucleoside 5'-phosphate + phosphate + H(+). The enzyme catalyses UDP + H2O = UMP + phosphate + H(+). It catalyses the reaction UTP + H2O = UDP + phosphate + H(+). It carries out the reaction CTP + H2O = CDP + phosphate + H(+). The catalysed reaction is GDP + H2O = GMP + phosphate + H(+). The enzyme catalyses 5-methyl-UTP + H2O = 5-methyl-UDP + phosphate + H(+). Its function is as follows. Catalyzes the hydrolysis of nucleoside triphosphates and diphosphates in a calcium- or magnesium-dependent manner, with a preference for pyrimidines. Preferentially hydrolyzes UTP and TTP on UTP and TTP. AMP, ADP, ATP and UMP are not substrates. Preferentially activated by Ca(2+) over Mg(2+). Functionally, has a broad substrate specificity with the ability of cleaving all nucleotide di- and triphosphates with the exception of adenosine di- and triphosphate (ADP and ATP). Preferentially hydrolyzes CTP, UDP, CDP, GTP and GDP. Can use either Ca(2+) or Mg(2+) equally. This is Ectonucleoside triphosphate diphosphohydrolase 4 (Entpd4) from Mus musculus (Mouse).